The primary structure comprises 209 residues: Probable GTP-binding protein EngB (209 aa).

The EngB-type G domain occupies 22–198; sequence TPLEIAFVGR…NRTVGSWFDA (177 aa). Residues serine 37 and threonine 59 each coordinate Mg(2+).

The protein belongs to the TRAFAC class TrmE-Era-EngA-EngB-Septin-like GTPase superfamily. EngB GTPase family. Mg(2+) is required as a cofactor.

Necessary for normal cell division and for the maintenance of normal septation. In Neisseria gonorrhoeae (strain ATCC 700825 / FA 1090), this protein is Probable GTP-binding protein EngB.